The sequence spans 207 residues: Guanylate kinase (207 aa).

The region spanning 5 to 183 is the Guanylate kinase-like domain; the sequence is GTLYIISAPS…ALYELEAIVE (179 aa). 12–19 contacts ATP; it reads APSGAGKT.

The protein belongs to the guanylate kinase family.

The protein localises to the cytoplasm. The enzyme catalyses GMP + ATP = GDP + ADP. In terms of biological role, essential for recycling GMP and indirectly, cGMP. This is Guanylate kinase from Alcanivorax borkumensis (strain ATCC 700651 / DSM 11573 / NCIMB 13689 / SK2).